The sequence spans 206 residues: dTTP/UTP pyrophosphatase (206 aa).

The active-site Proton acceptor is Asp79.

Belongs to the Maf family. YhdE subfamily. A divalent metal cation is required as a cofactor.

It is found in the cytoplasm. The enzyme catalyses dTTP + H2O = dTMP + diphosphate + H(+). The catalysed reaction is UTP + H2O = UMP + diphosphate + H(+). In terms of biological role, nucleoside triphosphate pyrophosphatase that hydrolyzes dTTP and UTP. May have a dual role in cell division arrest and in preventing the incorporation of modified nucleotides into cellular nucleic acids. In Rhizobium meliloti (strain 1021) (Ensifer meliloti), this protein is dTTP/UTP pyrophosphatase.